Reading from the N-terminus, the 210-residue chain is MSTKVPIYLKRGSRKGKKEKLRDLLSSDMISPPLGDFRHTIHIGSGGGNDTFGDISFLQGKFHLLPGTAVDETQEDSGFEMPFQFTRTATLCGRELPDGPSPLLKNAISLPVIGGPQALTLPAAQAPPKPPRLHLETPQASPQEAGTVDVWRIPEAGAAHSELTTESGAEEPFLSHASSLLSLHVDLGPSILDDVLQIMDQDLGHLQIPT.

N-acetylserine is present on S2. The 15-residue stretch at 30 to 44 (ISPPLGDFRHTIHIG) folds into the CRIB domain. Phosphoserine is present on residues S31, S101, and S141. The segment at 124–145 (AQAPPKPPRLHLETPQASPQEA) is disordered.

It belongs to the BORG/CEP family. As to quaternary structure, interacts with CDC42 and RHOQ, in a GTP-dependent manner, and with SEPT7.

It is found in the endomembrane system. The protein localises to the cytoplasm. Its subcellular location is the cytoskeleton. Its function is as follows. Probably involved in the organization of the actin cytoskeleton. May act downstream of CDC42 to induce actin filament assembly leading to cell shape changes. Induces pseudopodia formation in fibroblasts in a CDC42-dependent manner. The sequence is that of Cdc42 effector protein 2 (CDC42EP2) from Bos taurus (Bovine).